Here is a 652-residue protein sequence, read N- to C-terminus: Endoplasmic reticulum chaperone BiP (652 aa).

Positions 1–16 (MRHLLLALLLLGGARA) are cleaved as a signal peptide. Residues 34–37 (GTTY), Lys94, 225–227 (GGT), 291–298 (EKAKRALS), and 362–365 (GSTR) each bind ATP. The tract at residues 123-278 (KPHIQVDVGG…KKKTGKDVRK (156 aa)) is nucleotide-binding (NBD). Residues 407–417 (QDTGDLVLLDV) are interdomain linker. Residues 418–498 (CPLTLGIETV…PRGVPQIEVT (81 aa)) are substrate-binding (SBD). The disordered stretch occupies residues 630–652 (SKLYGSAGPPPTGEEEAAEKDEL). The segment covering 642-652 (GEEEAAEKDEL) has biased composition (acidic residues). Residues 649–652 (KDEL) carry the Prevents secretion from ER motif.

This sequence belongs to the heat shock protein 70 family. As to quaternary structure, monomer and homooligomer; homooligomerization via the interdomain linker inactivates the chaperone activity and acts as a storage of HSPA5/BiP molecules. Interacts with DNAJC10. Interacts with DNAJB9/ERdj4; leading to recruit HSPA5/BiP to ERN1/IRE1. Interacts with ERN1/IRE1; interaction takes place following interaction with DNAJB9/ERdj4 and leads to inactivate ERN1/IRE1.

The protein resides in the endoplasmic reticulum lumen. It localises to the melanosome. Its subcellular location is the cytoplasm. The protein localises to the cell surface. The catalysed reaction is ATP + H2O = ADP + phosphate + H(+). With respect to regulation, the chaperone activity is regulated by ATP-induced allosteric coupling of the nucleotide-binding (NBD) and substrate-binding (SBD) domains. In the ADP-bound and nucleotide-free (apo) states, the two domains have little interaction. In contrast, in the ATP-bound state the two domains are tightly coupled, which results in drastically accelerated kinetics in both binding and release of polypeptide substrates. J domain-containing co-chaperones (DNAJB9/ERdj4 or DNAJC10/ERdj5) stimulate the ATPase activity and are required for efficient substrate recognition by HSPA5/BiP. Homooligomerization inactivates participating HSPA5/BiP protomers and probably act as reservoirs to store HSPA5/BiP molecules when they are not needed by the cell. In terms of biological role, endoplasmic reticulum chaperone that plays a key role in protein folding and quality control in the endoplasmic reticulum lumen. Involved in the correct folding of proteins and degradation of misfolded proteins via its interaction with DNAJC10/ERdj5, probably to facilitate the release of DNAJC10/ERdj5 from its substrate. Acts as a key repressor of the EIF2AK3/PERK and ERN1/IRE1-mediated unfolded protein response (UPR). In the unstressed endoplasmic reticulum, recruited by DNAJB9/ERdj4 to the luminal region of ERN1/IRE1, leading to disrupt the dimerization of ERN1/IRE1, thereby inactivating ERN1/IRE1. Also binds and inactivates EIF2AK3/PERK in unstressed cells. Accumulation of misfolded protein in the endoplasmic reticulum causes release of HSPA5/BiP from ERN1/IRE1 and EIF2AK3/PERK, allowing their homodimerization and subsequent activation. May also play a role in apoptosis and cell proliferation. In Gallus gallus (Chicken), this protein is Endoplasmic reticulum chaperone BiP.